The following is a 189-amino-acid chain: Photosystem I assembly protein Ycf4 (189 aa).

The next 2 membrane-spanning stretches (helical) occupy residues 25-45 (SVYF…LAGL) and 62-82 (LVFI…SLAG).

Belongs to the Ycf4 family.

It localises to the cellular thylakoid membrane. Its function is as follows. Seems to be required for the assembly of the photosystem I complex. The polypeptide is Photosystem I assembly protein Ycf4 (Synechococcus sp. (strain JA-2-3B'a(2-13)) (Cyanobacteria bacterium Yellowstone B-Prime)).